A 201-amino-acid polypeptide reads, in one-letter code: Small ribosomal subunit protein uS4c (201 aa).

Residues 16-43 (GALPGLTSKKPRSASDLRNQSRSGKRSQ) form a disordered region. The region spanning 89 to 169 (MRLDNILFRL…LPKHLTLHSF (81 aa)) is the S4 RNA-binding domain.

It belongs to the universal ribosomal protein uS4 family. In terms of assembly, part of the 30S ribosomal subunit. Contacts protein S5. The interaction surface between S4 and S5 is involved in control of translational fidelity.

Its subcellular location is the plastid. It localises to the chloroplast. One of the primary rRNA binding proteins, it binds directly to 16S rRNA where it nucleates assembly of the body of the 30S subunit. Functionally, with S5 and S12 plays an important role in translational accuracy. This Nymphaea alba (White water-lily) protein is Small ribosomal subunit protein uS4c (rps4).